We begin with the raw amino-acid sequence, 366 residues long: Sulfite reductase, dissimilatory-type subunit beta (366 aa).

[4Fe-4S] cluster-binding residues include C140, C177, C178, C182, C220, C241, C244, and C247. Siroheme is bound at residue C182. The 4Fe-4S ferredoxin-type domain occupies 232–262; sequence KTIKVDVEKCMYCGNCYTMCPGMPLFDPEND.

As to quaternary structure, heterotetramer of two alpha and two beta subunits. Requires [4Fe-4S] cluster as cofactor. Siroheme is required as a cofactor.

The protein resides in the membrane. The catalysed reaction is [DsrC protein]-trisulfide + NAD(+) + 3 H2O = [DsrC protein]-dithiol + sulfite + NADH + 3 H(+). In terms of biological role, catalyzes the reduction of sulfite to sulfide. This is the terminal oxidation reaction in sulfate respiration. This chain is Sulfite reductase, dissimilatory-type subunit beta (dsrB), found in Archaeoglobus fulgidus (strain ATCC 49558 / DSM 4304 / JCM 9628 / NBRC 100126 / VC-16).